A 338-amino-acid polypeptide reads, in one-letter code: Cytoskeleton protein RodZ (338 aa).

Over 1–111 (MNTEATHEEN…LGKSRKKRDG (111 aa)) the chain is Cytoplasmic. An HTH cro/C1-type domain is found at 19–71 (LRLAREQLGLSQQVVAERLCLKVSTVRDIEEDKAPADLASTFLRGYIRSYARL). Positions 30-49 (QQVVAERLCLKVSTVRDIEE) form a DNA-binding region, H-T-H motif. The chain crosses the membrane as a helical; Signal-anchor for type II membrane protein span at residues 112 to 132 (WLMSFTWLVLFVVVGLTGAWW). Topologically, residues 133 to 338 (WQNHKAQQEE…TLNAEQSVTQ (206 aa)) are periplasmic. 2 stretches are compositionally biased toward polar residues: residues 147 to 180 (ADQS…QDQA) and 189 to 214 (GDTQ…SQQP). The disordered stretch occupies residues 147–245 (ADQSSAELSQ…AQSQLPVGQA (99 aa)). Low complexity predominate over residues 220 to 239 (SQANTDTAAQQNTTQPAQSQ).

It belongs to the RodZ family.

It is found in the cell inner membrane. Its function is as follows. Cytoskeletal protein that is involved in cell-shape control through regulation of the length of the long axis. The chain is Cytoskeleton protein RodZ from Cronobacter sakazakii (strain ATCC BAA-894) (Enterobacter sakazakii).